Here is a 351-residue protein sequence, read N- to C-terminus: Dihydroorotate dehydrogenase (quinone) (351 aa).

FMN-binding positions include 61–65 and Thr85; that span reads AGLDK. Lys65 contributes to the substrate binding site. 110–114 provides a ligand contact to substrate; the sequence is NRMGF. The FMN site is built by Asn139 and Asn172. Residue Asn172 coordinates substrate. Ser175 (nucleophile) is an active-site residue. Asn177 provides a ligand contact to substrate. The FMN site is built by Lys217 and Thr245. 246-247 lines the substrate pocket; that stretch reads NT. FMN is bound by residues Gly268, Gly297, and 318–319; that span reads YT.

It belongs to the dihydroorotate dehydrogenase family. Type 2 subfamily. In terms of assembly, monomer. FMN is required as a cofactor.

The protein resides in the cell membrane. It catalyses the reaction (S)-dihydroorotate + a quinone = orotate + a quinol. Its pathway is pyrimidine metabolism; UMP biosynthesis via de novo pathway; orotate from (S)-dihydroorotate (quinone route): step 1/1. Functionally, catalyzes the conversion of dihydroorotate to orotate with quinone as electron acceptor. This chain is Dihydroorotate dehydrogenase (quinone), found in Xylella fastidiosa (strain 9a5c).